The primary structure comprises 528 residues: Peptide chain release factor 3 (528 aa).

The 269-residue stretch at 11–279 folds into the tr-type G domain; sequence EKRRTFAIIS…GLVEWAPKPL (269 aa). GTP contacts are provided by residues 20 to 27, 88 to 92, and 142 to 145; these read SHPDAGKT, DTPGH, and NKCD.

The protein belongs to the TRAFAC class translation factor GTPase superfamily. Classic translation factor GTPase family. PrfC subfamily.

The protein localises to the cytoplasm. Increases the formation of ribosomal termination complexes and stimulates activities of RF-1 and RF-2. It binds guanine nucleotides and has strong preference for UGA stop codons. It may interact directly with the ribosome. The stimulation of RF-1 and RF-2 is significantly reduced by GTP and GDP, but not by GMP. The chain is Peptide chain release factor 3 from Psychromonas ingrahamii (strain DSM 17664 / CCUG 51855 / 37).